A 14507-amino-acid chain; its full sequence is Mucin-16 (14507 aa).

The segment covering 1-17 has biased composition (low complexity); sequence MLKPSGLPGSSSPTRSL. A disordered region spans residues 1–138; that stretch reads MLKPSGLPGS…PRTRTSSTEG (138 aa). The Extracellular segment spans residues 1–14451; sequence MLKPSGLPGS…EPLTGNSDLP (14451 aa). Composition is skewed to polar residues over residues 35-46 and 56-138; these read TGATLSPKTSTG and PFTS…STEG. Asn-139 carries an N-linked (GlcNAc...) asparagine glycan. 7 disordered regions span residues 160–180, 198–229, 265–287, 396–554, 655–674, 695–719, and 740–888; these read EKYT…ETPW, DSTA…TNPS, FSSP…LSSS, LGGT…STSV, VSKT…SYTM, SLGL…GHTK, and TSTF…RTTL. A compositionally biased stretch (low complexity) spans 166 to 178; the sequence is TETSTTEGDSTET. Positions 212–229 are enriched in polar residues; that stretch reads PAETTVTDSHTPGRTNPS. Composition is skewed to low complexity over residues 276 to 287 and 396 to 413; these read SRISTSAPLSSS and LGGT…STTL. 3 stretches are compositionally biased toward polar residues: residues 414–423, 431–441, and 460–478; these read VSEETNTHHS, GTLNTSMTPLE, and GFTT…SSSH. Asn-434 carries N-linked (GlcNAc...) asparagine glycosylation. Composition is skewed to low complexity over residues 485 to 497 and 508 to 525; these read TTGS…SSST and ATTS…ESTA. Positions 526 to 543 are enriched in polar residues; the sequence is QQFSEPQHTQWVETSPSM. 4 stretches are compositionally biased toward polar residues: residues 696-706, 740-780, 787-796, and 805-821; these read LGLTPLNTRHP, TSTF…NAAT, NATSPLTHPS, and SVLT…SPNI. N-linked (GlcNAc...) asparagine glycosylation occurs at Asn-787. Low complexity predominate over residues 823-846; sequence PTGTLTSESSESPSTLSLPSVSGV. 2 stretches are compositionally biased toward polar residues: residues 847-860 and 869-888; these read KTTF…THLF and TSNP…RTTL. Residues Asn-930 and Asn-957 are each glycosylated (N-linked (GlcNAc...) asparagine). 4 stretches are compositionally biased toward polar residues: residues 949–969, 1092–1101, 1124–1137, and 1301–1317; these read SQTN…TWPE, GSSTPGRTSQ, GTSS…TATH, and SGSS…NTGS. Disordered regions lie at residues 949-981, 1082-1101, 1121-1149, 1301-1378, 1593-1641, and 1704-1757; these read SQTN…LPSA, VSPS…RTSQ, PRDG…ARST, SGSS…NLTS, LGTQ…SSSS, and LSES…SPTT. Positions 1318–1328 are enriched in low complexity; it reads TWDPTTYITTT. Polar residues-rich tracts occupy residues 1334–1347, 1368–1378, 1596–1613, 1621–1633, and 1704–1745; these read SSAQ…VRTL, PKISSSPNLTS, QGRS…STDT, GPTN…PMDN, and LSES…GSQM. Asn-1375 carries N-linked (GlcNAc...) asparagine glycosylation. The N-linked (GlcNAc...) asparagine glycan is linked to Asn-1633. Positions 1746–1757 are enriched in low complexity; it reads STSIPLTSSPTT. Residues Asn-1840, Asn-1877, and Asn-1890 are each glycosylated (N-linked (GlcNAc...) asparagine). Residues 1846 to 1908 are compositionally biased toward polar residues; that stretch reads DLSHGVHTSS…TEKSEVSSSI (63 aa). Disordered regions lie at residues 1846 to 1930, 2010 to 2033, 2064 to 2140, and 2153 to 2177; these read DLSH…PGNR, VSAS…YSSA, WPST…GASI, and RSDV…SAGT. Composition is skewed to low complexity over residues 2019–2033 and 2064–2085; these read SVSS…YSSA and WPST…NPSS. A compositionally biased stretch (polar residues) spans 2111 to 2132; it reads HGPQNTAASTLNTDASSVTGLS. N-linked (GlcNAc...) asparagine glycosylation is found at Asn-2345 and Asn-2375. Disordered regions lie at residues 2393-2455 and 2566-2591; these read PTSI…PFTI and SESK…ETSA. Composition is skewed to low complexity over residues 2417-2429 and 2566-2583; these read TSTT…TSPS and SESK…TPTS. Residue Asn-2737 is glycosylated (N-linked (GlcNAc...) asparagine). Disordered stretches follow at residues 2789 to 2822, 2838 to 2885, 2901 to 3006, 3019 to 3052, 3083 to 3148, 3172 to 3235, 3251 to 3276, 3299 to 3392, 3415 to 3436, and 3462 to 3491; these read TTGS…LTMN, TATQ…TWGI, DTKS…AMTS, TGQA…TSRK, TLNM…ASSI, SQAA…PETT, ALGS…PTEN, GTPG…KTET, TSRS…TSGS, and VSLP…VTSP. Positions 2803–2819 are enriched in polar residues; it reads SGSTHSTGTKTFSSLPL. Positions 2864–2875 are enriched in low complexity; it reads SASSSPSKAFAS. Polar residues-rich tracts occupy residues 2876–2885 and 2901–2918; these read LTTAPPTWGI and DTKS…NTIP. Residues 2919–2931 show a composition bias toward low complexity; the sequence is DSDASTASSSLSK. Over residues 2942–2968 the composition is skewed to polar residues; the sequence is MTSTKAISASSFQSTGFTETPEGSASP. Positions 3019–3035 are enriched in low complexity; sequence TGQAARSGSSSSPISLS. The segment covering 3041 to 3052 has biased composition (polar residues); it reads SFLSPTASTSRK. The N-linked (GlcNAc...) asparagine glycan is linked to Asn-3085. Low complexity predominate over residues 3107–3116; that stretch reads TAETQTLTFT. Polar residues-rich tracts occupy residues 3117–3132 and 3172–3181; these read PSET…SPTE and SQAAQGNSTW. Asn-3178 carries an N-linked (GlcNAc...) asparagine glycan. The segment covering 3188–3200 has biased composition (low complexity); the sequence is TGSSPAGTSPGSP. 2 stretches are compositionally biased toward polar residues: residues 3201 to 3214 and 3251 to 3261; these read EMST…SKEP and ALGSGSTSISH. Residues 3263 to 3274 show a composition bias toward low complexity; that stretch reads PTGTTSPTKSPT. Composition is skewed to polar residues over residues 3299-3342 and 3360-3383; these read GTPG…TTGM and VSLS…SSLT. 2 stretches are compositionally biased toward low complexity: residues 3424–3436 and 3477–3491; these read SSTS…TSGS and PSGG…VTSP. Asn-3501 carries N-linked (GlcNAc...) asparagine glycosylation. The span at 3538 to 3555 shows a compositional bias: low complexity; it reads ISTTITTMGTNSISTTTP. Disordered stretches follow at residues 3538–3588, 3644–3672, 3794–3829, 3843–3879, 3914–3982, 4024–4056, 4094–4121, and 4138–4166; these read ISTT…STAA, TPSS…TAST, RSSG…GQVP, AKTP…TPSA, LESG…SPVV, MDTS…SSKR, AMQT…WTGT, and FSKG…VPIH. 2 stretches are compositionally biased toward polar residues: residues 3812 to 3824 and 3848 to 3868; these read QTST…TSAH and ATFQ…TSDS. The span at 3916–3927 shows a compositional bias: low complexity; the sequence is SGTTSSPSWKSS. Over residues 3946–3982 the composition is skewed to polar residues; it reads PSTNTVETTGWVTSSEHASHSTIPAHSASSKLTSPVV. Over residues 4026–4041 the composition is skewed to low complexity; it reads TSSTTQTSIISSPGST. A compositionally biased stretch (polar residues) spans 4095–4121; that stretch reads MQTSPPGATSLSAPTLDTSATASWTGT. Over residues 4152-4164 the composition is skewed to low complexity; sequence SVEETSSSSSLVP. Residues Asn-4220, Asn-4498, Asn-4606, Asn-4613, and Asn-4624 are each glycosylated (N-linked (GlcNAc...) asparagine). Disordered regions lie at residues 4728 to 4748, 4845 to 4961, and 5026 to 5066; these read VKDV…PSSQ, HSTV…TRLS, and VSWT…KLSS. The span at 4856-4876 shows a compositional bias: polar residues; the sequence is KVTSPNVTTSTMEDTTISRSI. The N-linked (GlcNAc...) asparagine glycan is linked to Asn-4861. 2 stretches are compositionally biased toward low complexity: residues 4877 to 4914 and 4924 to 4939; these read PKSS…ETST and TTEV…SSTS. Polar residues-rich tracts occupy residues 4944 to 4961 and 5026 to 5037; these read DQST…TRLS and VSWTSPPSVDKT. A compositionally biased stretch (low complexity) spans 5038–5047; that stretch reads SSPSSFLSSP. Residues 5048–5059 are compositionally biased toward polar residues; it reads AMTTPSLISSTL. Residues Asn-5096, Asn-5131, and Asn-5228 are each glycosylated (N-linked (GlcNAc...) asparagine). 3 disordered regions span residues 5128-5149, 5221-5249, and 5271-5303; these read VKAN…ETPK, EVSS…DTFT, and TQAS…TVTQ. Polar residues predominate over residues 5221–5234; that stretch reads EVSSTGVNSSSKIS. The segment covering 5280–5293 has biased composition (low complexity); that stretch reads SHSTLPLDTSTTLS. Over residues 5294 to 5303 the composition is skewed to polar residues; it reads QGGTHSTVTQ. Asn-5320 is a glycosylation site (N-linked (GlcNAc...) asparagine). Disordered regions lie at residues 5328-5365, 5381-5400, 5426-5507, 5519-5538, 5624-5654, 5675-5696, and 5727-5747; these read PVEE…PLPV, GTTS…SITH, NVGT…TNTA, ASRT…DRPT, PVEE…ESIP, LGTT…PTQE, and ISGH…KATS. Low complexity-rich tracts occupy residues 5333 to 5365 and 5381 to 5393; these read SSVS…PLPV and GTTS…SSPP. A glycan (N-linked (GlcNAc...) asparagine) is linked at Asn-5394. Composition is skewed to polar residues over residues 5426-5441 and 5447-5485; these read NVGT…SSVL and SKAT…TASL. A glycan (N-linked (GlcNAc...) asparagine) is linked at Asn-5470. Low complexity-rich tracts occupy residues 5495 to 5504, 5520 to 5532, 5633 to 5654, and 5675 to 5688; these read SEKTSSTTET, SRTE…TSIS, SLMS…ESIP, and LGTT…SSPP. An N-linked (GlcNAc...) asparagine glycan is attached at Asn-5689. A compositionally biased stretch (polar residues) spans 5727–5737; that stretch reads ISGHESQSSVP. The N-linked (GlcNAc...) asparagine glycan is linked to Asn-5863. Disordered regions lie at residues 5882-5931 and 6054-6078; these read STAS…SSPV and STST…TPEL. A compositionally biased stretch (polar residues) spans 5903-5916; the sequence is TTTMSRSTKGVSWQ. The segment covering 5917 to 5928 has biased composition (low complexity); it reads SPPSVEETSSPS. Residues 6054 to 6063 show a composition bias toward polar residues; it reads STSTPGSPET. N-linked (GlcNAc...) asparagine glycosylation occurs at Asn-6088. Disordered stretches follow at residues 6122–6149, 6219–6251, 6399–6425, 6438–6459, 6497–6545, and 6682–6714; these read PASA…PLTI, NSLS…LVSV, SRTE…DTST, TKSE…SQGT, ISGT…TSLP, and TTGA…PDIS. Low complexity-rich tracts occupy residues 6134–6149, 6226–6251, and 6399–6410; these read SPEA…PLTI, PLLV…LVSV, and SRTELTSSSRTS. Composition is skewed to polar residues over residues 6411-6425 and 6445-6459; these read IQGT…DTST and IATQ…SQGT. Over residues 6500–6523 the composition is skewed to low complexity; it reads TSPPSVEKTSSSSSLLSLPAITSP. 2 stretches are compositionally biased toward polar residues: residues 6530–6545 and 6683–6699; these read LPES…TSLP and TGAT…SRRT. N-linked (GlcNAc...) asparagine glycosylation is present at Asn-6732. Disordered regions lie at residues 6800-6822, 6845-6865, and 6886-6939; these read SFSS…TLPK, TLGT…STSH, and TAAT…SETT. Positions 6848 to 6864 are enriched in low complexity; sequence TSPEPTTSSPPNLSSTS. N-linked (GlcNAc...) asparagine glycosylation occurs at Asn-6859. A compositionally biased stretch (polar residues) spans 6886–6905; the sequence is TAATNVETTSSGHGSQSSVL. The segment covering 6919–6938 has biased composition (low complexity); sequence TTSTMGHTTVSTSMSVSSET. Asn-6961 carries an N-linked (GlcNAc...) asparagine glycan. 14 disordered regions span residues 6981-7004, 7028-7107, 7143-7208, 7279-7302, 7320-7345, 7360-7427, 7437-7456, 7463-7503, 7527-7553, 7577-7597, 7726-7782, 7825-7849, 7908-7927, and 7970-8000; these read AEVS…QSTV, MTIP…ATTS, TSPE…TSKA, SRTE…MLPE, ESSE…TLDT, QRLP…SLLT, LDAS…STSV, EVTT…ETTK, SNTR…SEET, TEAI…TMSQ, ATTT…TTSS, LASS…TKMS, HTSP…TSST, and PSFS…SPLP. Polar residues predominate over residues 7028 to 7038; sequence MTIPTQTGPSG. Positions 7039 to 7055 are enriched in low complexity; it reads STSQDTLTLDTSTTKSQ. Residues 7057 to 7075 are compositionally biased toward polar residues; it reads KTHSTLTQRFPHSEMTTLM. Over residues 7086–7105 the composition is skewed to low complexity; sequence SSPSLENPSSLPSLLSLPAT. The segment covering 7166-7200 has biased composition (polar residues); that stretch reads GKDTTNTEAVHPSTNTAASNVEIPSSGHESPSSAL. A compositionally biased stretch (low complexity) spans 7279 to 7298; that stretch reads SRTEVTSSSRTSISGSAEST. Composition is skewed to polar residues over residues 7322 to 7345, 7360 to 7371, and 7390 to 7402; these read SEMT…TLDT, QRLPHSEITTLV, and SPPS…SAMI. Composition is skewed to low complexity over residues 7403 to 7427 and 7439 to 7455; these read SPSP…SLLT and ASAE…SSTS. Positions 7474–7484 are enriched in polar residues; it reads FSNTAVTKVGT. Residues 7485–7494 are compositionally biased toward low complexity; it reads SSSGHESPSS. A compositionally biased stretch (low complexity) spans 7733 to 7749; sequence GTSTEPGTSSSSSLSTT. Over residues 7750-7765 the composition is skewed to basic and acidic residues; the sequence is SHERLTTYKDTAHTEA. Polar residues predominate over residues 7768–7782; sequence PSTNTGGTNVATTSS. 3 stretches are compositionally biased toward low complexity: residues 7835–7846, 7915–7927, and 7973–8000; these read ESSGSEGTSSGT, TTQG…TSST, and SLMS…SPLP. Residues Asn-8029 and Asn-8055 are each glycosylated (N-linked (GlcNAc...) asparagine). Disordered stretches follow at residues 8042–8078, 8111–8134, 8312–8331, 8342–8389, 8411–8472, 8604–8624, 8674–8741, and 8775–8880; these read EVTT…LADS, IQTE…GTSL, GISR…TSHE, TEDM…YTMG, TSSL…ISPD, MLRT…STSA, SPMA…TKVS, and TPLT…HSSP. Polar residues predominate over residues 8052 to 8078; the sequence is PSSNRTVTDVGTSSSGHESTSFVLADS. Positions 8319-8328 are enriched in low complexity; that stretch reads TSSTSNLSST. Asn-8324 carries N-linked (GlcNAc...) asparagine glycosylation. Residues 8345 to 8389 are compositionally biased toward polar residues; the sequence is MQPSTHTAVTNVRTSISGHESQSSVLSDSETPKATSPMGTTYTMG. Positions 8607-8624 are enriched in low complexity; the sequence is TSSEPETSSPPNLSSTSA. N-linked (GlcNAc...) asparagine glycans are attached at residues Asn-8618 and Asn-8684. Polar residues-rich tracts occupy residues 8674-8740 and 8781-8810; these read SPMA…TTKV and GSAE…SSRA. Positions 8850 to 8880 are enriched in low complexity; that stretch reads TSPPSSLVSLSAVTSPSPLYSTPSESSHSSP. N-linked (GlcNAc...) asparagine glycosylation is present at Asn-8913. Disordered stretches follow at residues 8995–9018 and 9147–9168; these read ESTS…SATK and SLSS…DSIH. A glycan (N-linked (GlcNAc...) asparagine) is linked at Asn-9202. Over residues 9294 to 9307 the composition is skewed to low complexity; the sequence is SISEETSSATEKST. Positions 9294–9460 are disordered; that stretch reads SISEETSSAT…TPSGSSHSSP (167 aa). 2 stretches are compositionally biased toward polar residues: residues 9308–9357 and 9374–9412; these read VLSS…STPL and SGAT…TTPM. A compositionally biased stretch (low complexity) spans 9431–9460; sequence SPPSSLVSSSSVTSPSPLYSTPSGSSHSSP. The N-linked (GlcNAc...) asparagine glycan is linked to Asn-9493. 4 disordered regions span residues 9611 to 9635, 9726 to 9753, 9771 to 9791, and 9869 to 9890; these read ATPE…AQST, SSSS…SPSS, VLDT…STSV, and TEPT…ETTS. Over residues 9621–9635 the composition is skewed to polar residues; sequence MPSSRTSIPGPAQST. Composition is skewed to low complexity over residues 9774-9790 and 9881-9890; these read TSSE…SSTS and ETSTSEETTS. N-linked (GlcNAc...) asparagine glycosylation is present at Asn-9785. 2 N-linked (GlcNAc...) asparagine glycosylation sites follow: Asn-10075 and Asn-10173. Disordered regions lie at residues 10175 to 10218 and 10445 to 10469; these read SLDT…PPAS and TIRP…TGGT. Positions 10178–10193 are enriched in low complexity; it reads TSSVTPTNTPSSPGST. Polar residues predominate over residues 10194-10212; the sequence is HLLQSSKTDFTSSAKTSSP. N-linked (GlcNAc...) asparagine glycosylation is present at Asn-10510. Over residues 10544-10573 the composition is skewed to polar residues; it reads SLGAETSTALPRTTPSVFNRESETTASLVS. Disordered regions lie at residues 10544-10590 and 10689-10719; these read SLGA…DVSS and ETSS…PGAE. An N-linked (GlcNAc...) asparagine glycan is attached at Asn-10700. Over residues 10708 to 10719 the composition is skewed to polar residues; that stretch reads ATPSIATSPGAE. Asn-10749 is a glycosylation site (N-linked (GlcNAc...) asparagine). Residues 10849-10860 show a composition bias toward polar residues; sequence TTPSMTTSHGAE. Disordered stretches follow at residues 10849 to 10872, 10898 to 10926, and 11003 to 11036; these read TTPS…TVST, LSPG…TPTV, and LPTL…TVSP. The segment covering 10861-10872 has biased composition (low complexity); that stretch reads SSSAVPTPTVST. Low complexity predominate over residues 11003-11018; the sequence is LPTLTLSPGEPETTPS. An N-linked (GlcNAc...) asparagine glycan is attached at Asn-11053. Residues 11072–11092 form a disordered region; the sequence is SMATSHGAEASSAVPTPTVSP. 2 N-linked (GlcNAc...) asparagine glycosylation sites follow: Asn-11224 and Asn-11263. Polar residues-rich tracts occupy residues 11269–11284 and 11358–11381; these read HPAE…TSRF and STTV…SIAT. Disordered stretches follow at residues 11269–11301, 11358–11400, 11508–11537, 11583–11724, 11836–11861, and 11913–11937; these read HPAE…SPEA, STTV…SPDV, KFSH…STTT, ETST…TSPR, SPTA…TSTM, and QTVT…FSRT. N-linked (GlcNAc...) asparagine glycosylation occurs at Asn-11367. Polar residues-rich tracts occupy residues 11583–11594, 11631–11651, and 11658–11672; these read ETSTTVSGTIPN, VTSQ…TLTP, and TTAS…QTGF. Asn-11594 is a glycosylation site (N-linked (GlcNAc...) asparagine). A compositionally biased stretch (low complexity) spans 11700 to 11717; the sequence is PVSRTTSSFSHSSPDATP. Polar residues-rich tracts occupy residues 11849–11861 and 11913–11928; these read PLST…TSTM and QTVT…SVTS. 12 tandem repeats follow at residues 12067–12223, 12224–12381, 12382–12537, 12538–12692, 12693–12848, 12849–13004, 13005–13160, 13161–13316, 13317–13472, 13473–13628, 13629–13784, and 13785–13939. A 12 X approximate tandem repeats region spans residues 12067–13939; sequence AATVPFMVPF…FTINNLRYMA (1873 aa). The region spanning 12072–12193 is the SEA 1 domain; sequence FMVPFTLNFT…NSLYVNGFTH (122 aa). N-linked (GlcNAc...) asparagine glycosylation is found at Asn-12079, Asn-12100, and Asn-12116. Cys-12126 and Cys-12146 are disulfide-bonded. N-linked (GlcNAc...) asparagine glycosylation is present at Asn-12168. The interval 12196–12226 is disordered; the sequence is SMPTTSTPGTSTVDVGTSGTPSSSPSPTTAG. The SEA 2 domain maps to 12228-12349; it reads LLMPFTLNFT…NSLYVNGFTH (122 aa). N-linked (GlcNAc...) asparagine glycosylation is found at Asn-12235 and Asn-12272. A disulfide bridge connects residues Cys-12282 and Cys-12302. The interval 12353–12376 is disordered; sequence VSTTSTPGTSTVDLRTSGTPSSLS. SEA domains follow at residues 12386–12507, 12542–12663, and 12697–12818; these read LLVP…GFTH and LLVL…GFTH. N-linked (GlcNAc...) asparagine glycans are attached at residues Asn-12393, Asn-12414, and Asn-12430. The cysteines at positions 12440 and 12460 are disulfide-linked. 3 N-linked (GlcNAc...) asparagine glycosylation sites follow: Asn-12549, Asn-12570, and Asn-12586. Cys-12596 and Cys-12616 are oxidised to a cystine. Asn-12704, Asn-12725, and Asn-12741 each carry an N-linked (GlcNAc...) asparagine glycan. A disulfide bond links Cys-12751 and Cys-12771. A compositionally biased stretch (polar residues) spans 12819 to 12834; the sequence is QTSAPNTSTPGTSTVD. Positions 12819–12849 are disordered; that stretch reads QTSAPNTSTPGTSTVDLGTSGTPSSLPSPTS. An N-linked (GlcNAc...) asparagine glycan is attached at Asn-12824. Positions 12835 to 12849 are enriched in low complexity; that stretch reads LGTSGTPSSLPSPTS. One can recognise an SEA 6 domain in the interval 12853–12974; that stretch reads LLVPFTLNFT…NSLYVNGFTH (122 aa). Residues Asn-12860, Asn-12881, and Asn-12897 are each glycosylated (N-linked (GlcNAc...) asparagine). A disulfide bridge links Cys-12907 with Cys-12927. Over residues 12978–12990 the composition is skewed to polar residues; the sequence is VAPTSTPGTSTVD. The interval 12978-13003 is disordered; sequence VAPTSTPGTSTVDLGTSGTPSSLPSP. Residues 12991–13003 are compositionally biased toward low complexity; sequence LGTSGTPSSLPSP. 2 SEA domains span residues 13009-13130 and 13165-13286; these read LLVP…GFTH and LLVP…GFTQ. N-linked (GlcNAc...) asparagine glycans are attached at residues Asn-13016, Asn-13037, and Asn-13053. Cys-13063 and Cys-13083 are disulfide-bonded. N-linked (GlcNAc...) asparagine glycosylation is found at Asn-13172 and Asn-13193. Cysteines 13219 and 13239 form a disulfide. Residues 13291–13313 show a composition bias toward polar residues; sequence PTTSTPGTFTVQPETSETPSSLP. The segment at 13291 to 13317 is disordered; that stretch reads PTTSTPGTFTVQPETSETPSSLPGPTA. 2 consecutive SEA domains span residues 13321 to 13442 and 13477 to 13598; these read VLLP…GFTH and LLVL…GFTQ. N-linked (GlcNAc...) asparagine glycans are attached at residues Asn-13328, Asn-13349, and Asn-13365. Cysteines 13375 and 13395 form a disulfide. N-linked (GlcNAc...) asparagine glycosylation is found at Asn-13484, Asn-13505, and Asn-13521. Cys-13531 and Cys-13551 are joined by a disulfide. Positions 13603–13621 are enriched in polar residues; the sequence is PTTSIPGTPTVDLGTSGTP. The interval 13603 to 13625 is disordered; that stretch reads PTTSIPGTPTVDLGTSGTPVSKP. 4 SEA domains span residues 13633 to 13754, 13789 to 13909, 13922 to 14043, and 14073 to 14193; these read LLVL…GFTH, LLIL…GFTH, SEEP…GYNE, and HLKT…GYAP. N-linked (GlcNAc...) asparagine glycans are attached at residues Asn-13640 and Asn-13661. Cys-13687 and Cys-13707 form a disulfide bridge. Asn-13733, Asn-13744, Asn-13796, Asn-13816, Asn-13832, Asn-13929, and Asn-13950 each carry an N-linked (GlcNAc...) asparagine glycan. A disulfide bridge links Cys-13976 with Cys-13996. 2 N-linked (GlcNAc...) asparagine glycosylation sites follow: Asn-14080 and Asn-14100. Residues Cys-14126 and Cys-14146 are joined by a disulfide bond. N-linked (GlcNAc...) asparagine glycans are attached at residues Asn-14195, Asn-14212, Asn-14254, Asn-14287, Asn-14326, and Asn-14363. SEA domains lie at 14198-14309 and 14319-14438; these read IRGE…EMES and STQH…GYSP. A disulfide bond links Cys-14373 and Cys-14393. Asn-14417 and Asn-14423 each carry an N-linked (GlcNAc...) asparagine glycan. The chain crosses the membrane as a helical span at residues 14452 to 14472; it reads FWAVILIGLAGLLGVITCLIC. The Cytoplasmic segment spans residues 14473-14507; that stretch reads GVLVTTRRRKKEGEYNVQQQCPGYYQSHLDLEDLQ.

Binds to MSLN. Binding to MSLN mediates heterotypic cell adhesion. This may contribute to the metastasis of ovarian cancer to the peritoneum by initiating cell attachment to the mesothelial epithelium via binding to MSLN. Post-translationally, heavily O-glycosylated; expresses both type 1 and type 2 core glycans. In terms of processing, heavily N-glycosylated; expresses primarily high mannose and complex bisecting type N-linked glycans. May be phosphorylated. Phosphorylation of the intracellular C-terminal domain may induce proteolytic cleavage and the liberation of the extracellular domain into the extracellular space. Post-translationally, may contain numerous disulfide bridges. Association of several molecules of the secreted form may occur through interchain disulfide bridges providing an extraordinarily large gel-like matrix in the extracellular space or in the lumen of secretory ducts. In terms of tissue distribution, expressed in corneal and conjunctival epithelia (at protein level). Overexpressed in ovarian carcinomas and ovarian low malignant potential (LMP) tumors as compared to the expression in normal ovarian tissue and ovarian adenomas.

It is found in the cell membrane. It localises to the secreted. The protein localises to the extracellular space. Functionally, thought to provide a protective, lubricating barrier against particles and infectious agents at mucosal surfaces. The protein is Mucin-16 of Homo sapiens (Human).